The chain runs to 758 residues: Glucan endo-1,3-beta-D-glucosidase (758 aa).

Residues 1–34 (MSHASRRRWRRATTSAATAALLCGALLTFPSAPA) constitute a signal peptide (tat-type signal). The beta-sandwich subdomain stretch occupies residues 38-251 (VRLGSGSYTT…SGYASVALLP (214 aa)). The GH81 domain occupies 38 to 704 (VRLGSGSYTT…QWLSTLAEFG (667 aa)). The tract at residues 252–342 (SPDDFDRYAP…EGDRFTTELT (91 aa)) is alpha/beta subdomain. Positions 352 to 704 (TVDSADHQRL…QWLSTLAEFG (353 aa)) are (alpha/beta)6 barrel subdomain. (1,3-beta-D-glucosyl)n is bound by residues Tyr-382, Lys-386, Asp-457, His-461, Asn-532, Glu-534, and Glu-538. Residue Asp-457 is part of the active site. Residues Glu-534 and Glu-538 contribute to the active site.

Belongs to the glycosyl hydrolase 81 family. In terms of processing, predicted to be exported by the Tat system. The position of the signal peptide cleavage has not been experimentally proven.

The protein localises to the secreted. It catalyses the reaction Hydrolysis of (1-&gt;3)-beta-D-glucosidic linkages in (1-&gt;3)-beta-D-glucans.. Its function is as follows. Cleaves internal linkages in 1,3-beta-glucan. May contribute to biomass degradation by hydrolyzing the 1,3-beta-linked plant polymer callose that is present in decomposing plant tissue. The protein is Glucan endo-1,3-beta-D-glucosidase of Thermobifida fusca (strain YX).